A 301-amino-acid chain; its full sequence is Methionyl-tRNA formyltransferase (301 aa).

Position 109–112 (109–112) interacts with (6S)-5,6,7,8-tetrahydrofolate; the sequence is SLLP.

Belongs to the Fmt family.

It carries out the reaction L-methionyl-tRNA(fMet) + (6R)-10-formyltetrahydrofolate = N-formyl-L-methionyl-tRNA(fMet) + (6S)-5,6,7,8-tetrahydrofolate + H(+). Its function is as follows. Attaches a formyl group to the free amino group of methionyl-tRNA(fMet). The formyl group appears to play a dual role in the initiator identity of N-formylmethionyl-tRNA by promoting its recognition by IF2 and preventing the misappropriation of this tRNA by the elongation apparatus. This Anaplasma marginale (strain St. Maries) protein is Methionyl-tRNA formyltransferase.